Here is a 288-residue protein sequence, read N- to C-terminus: Shikimate dehydrogenase (NADP(+)) (288 aa).

Shikimate-binding positions include 15-17 (SKS) and Thr-64. Residue Lys-68 is the Proton acceptor of the active site. Glu-83 provides a ligand contact to NADP(+). Positions 92 and 117 each coordinate shikimate. Residues 141-145 (GAGGA), 165-170 (NRTLSK), and Met-232 contribute to the NADP(+) site. Tyr-234 is a binding site for shikimate. Residue Gly-254 coordinates NADP(+).

Belongs to the shikimate dehydrogenase family. As to quaternary structure, homodimer.

It carries out the reaction shikimate + NADP(+) = 3-dehydroshikimate + NADPH + H(+). It participates in metabolic intermediate biosynthesis; chorismate biosynthesis; chorismate from D-erythrose 4-phosphate and phosphoenolpyruvate: step 4/7. In terms of biological role, involved in the biosynthesis of the chorismate, which leads to the biosynthesis of aromatic amino acids. Catalyzes the reversible NADPH linked reduction of 3-dehydroshikimate (DHSA) to yield shikimate (SA). The chain is Shikimate dehydrogenase (NADP(+)) from Psychrobacter arcticus (strain DSM 17307 / VKM B-2377 / 273-4).